The chain runs to 141 residues: MDQSSSTLLINQRKSSSSPTRIPPKQKRKSTTTHKPIKVRYISNPMRVETCPSKFRELVQELTGQDAADLPPSPTTFTAVDLHRPCESEMNLEPLDGEVRGEYYSPLDEEVFNAPQMSAGLSGFFSSGFYNVNALGSIGSL.

Residues 1–20 (MDQSSSTLLINQRKSSSSPT) are compositionally biased toward polar residues. The interval 1-36 (MDQSSSTLLINQRKSSSSPTRIPPKQKRKSTTTHKP) is disordered. A chloroplast-targeting transit peptide spans 1–38 (MDQSSSTLLINQRKSSSSPTRIPPKQKRKSTTTHKPIK). The Bipartite nuclear localization signal signature appears at 13–29 (RKSSSSPTRIPPKQKRK). Basic residues predominate over residues 24 to 36 (PKQKRKSTTTHKP). A VQ motif is present at residues 55–64 (FRELVQELTG).

As to quaternary structure, interacts with sigma factors in chloroplast. Interacts with WRKY33 in the nucleus.

It is found in the plastid. Its subcellular location is the chloroplast. It localises to the nucleus. Functionally, functions as activator of WRKY33 in plant defense against necrotrophic pathogens by stimulating the DNA-binding activity of WRKY33. This is Sigma factor binding protein 2, chloroplastic (SIB2) from Arabidopsis thaliana (Mouse-ear cress).